The chain runs to 900 residues: Protein translocase subunit SecA (900 aa).

Residues Q87, 105–109, and D512 each bind ATP; that span reads GEGKT. The segment covering 842–852 has biased composition (basic and acidic residues); sequence QQRREEAERLA. The disordered stretch occupies residues 842-900; sequence QQRREEAERLARQQQLSHQEEDSLNTGSPAQADRKIGRNDPCPCGSGKKYKQCHGRLQK. C883, C885, C894, and H895 together coordinate Zn(2+). A compositionally biased stretch (basic residues) spans 889–900; sequence KKYKQCHGRLQK.

The protein belongs to the SecA family. Monomer and homodimer. Part of the essential Sec protein translocation apparatus which comprises SecA, SecYEG and auxiliary proteins SecDF-YajC and YidC. It depends on Zn(2+) as a cofactor.

It localises to the cell inner membrane. The protein resides in the cytoplasm. The enzyme catalyses ATP + H2O + cellular proteinSide 1 = ADP + phosphate + cellular proteinSide 2.. Functionally, part of the Sec protein translocase complex. Interacts with the SecYEG preprotein conducting channel. Has a central role in coupling the hydrolysis of ATP to the transfer of proteins into and across the cell membrane, serving both as a receptor for the preprotein-SecB complex and as an ATP-driven molecular motor driving the stepwise translocation of polypeptide chains across the membrane. The sequence is that of Protein translocase subunit SecA from Pectobacterium carotovorum subsp. carotovorum (strain PC1).